The following is a 302-amino-acid chain: UDP-N-acetylenolpyruvoylglucosamine reductase (302 aa).

The FAD-binding PCMH-type domain maps to 31-213; sequence KIGGPADFLI…KKIREFREKR (183 aa). Arg176 is a catalytic residue. Ser226 functions as the Proton donor in the catalytic mechanism. Glu296 is a catalytic residue.

The protein belongs to the MurB family. FAD serves as cofactor.

It is found in the cytoplasm. It carries out the reaction UDP-N-acetyl-alpha-D-muramate + NADP(+) = UDP-N-acetyl-3-O-(1-carboxyvinyl)-alpha-D-glucosamine + NADPH + H(+). The protein operates within cell wall biogenesis; peptidoglycan biosynthesis. Its function is as follows. Cell wall formation. The protein is UDP-N-acetylenolpyruvoylglucosamine reductase of Carboxydothermus hydrogenoformans (strain ATCC BAA-161 / DSM 6008 / Z-2901).